The chain runs to 208 residues: Ribosomal RNA small subunit methyltransferase G (208 aa).

Residues glycine 74, leucine 79, 125 to 126, and arginine 140 contribute to the S-adenosyl-L-methionine site; that span reads VE.

Belongs to the methyltransferase superfamily. RNA methyltransferase RsmG family.

Its subcellular location is the cytoplasm. It carries out the reaction guanosine(527) in 16S rRNA + S-adenosyl-L-methionine = N(7)-methylguanosine(527) in 16S rRNA + S-adenosyl-L-homocysteine. Specifically methylates the N7 position of guanine in position 527 of 16S rRNA. The sequence is that of Ribosomal RNA small subunit methyltransferase G from Shewanella denitrificans (strain OS217 / ATCC BAA-1090 / DSM 15013).